The primary structure comprises 91 residues: Small ribosomal subunit protein uS17 (91 aa).

Belongs to the universal ribosomal protein uS17 family. As to quaternary structure, part of the 30S ribosomal subunit.

Its function is as follows. One of the primary rRNA binding proteins, it binds specifically to the 5'-end of 16S ribosomal RNA. The protein is Small ribosomal subunit protein uS17 of Salinispora arenicola (strain CNS-205).